Consider the following 432-residue polypeptide: 3-phosphoshikimate 1-carboxyvinyltransferase (432 aa).

K23, S24, and R28 together coordinate 3-phosphoshikimate. A phosphoenolpyruvate-binding site is contributed by K23. Positions 95 and 123 each coordinate phosphoenolpyruvate. Residues S167, Q169, D317, and K344 each coordinate 3-phosphoshikimate. Q169 is a binding site for phosphoenolpyruvate. D317 acts as the Proton acceptor in catalysis. R348 and R390 together coordinate phosphoenolpyruvate.

Belongs to the EPSP synthase family. Monomer.

It is found in the cytoplasm. It carries out the reaction 3-phosphoshikimate + phosphoenolpyruvate = 5-O-(1-carboxyvinyl)-3-phosphoshikimate + phosphate. The protein operates within metabolic intermediate biosynthesis; chorismate biosynthesis; chorismate from D-erythrose 4-phosphate and phosphoenolpyruvate: step 6/7. Catalyzes the transfer of the enolpyruvyl moiety of phosphoenolpyruvate (PEP) to the 5-hydroxyl of shikimate-3-phosphate (S3P) to produce enolpyruvyl shikimate-3-phosphate and inorganic phosphate. In Staphylococcus saprophyticus subsp. saprophyticus (strain ATCC 15305 / DSM 20229 / NCIMB 8711 / NCTC 7292 / S-41), this protein is 3-phosphoshikimate 1-carboxyvinyltransferase.